Here is a 582-residue protein sequence, read N- to C-terminus: Hemagglutinin-neuraminidase (582 aa).

Topologically, residues 1–34 (MEPSKLFTMSDNATFAPGPVVNAADKKTFRTCFR) are intravirion. Residues 35–55 (ILVLSVQAVTLILVIVTLGEL) traverse the membrane as a helical segment. Residues 56-582 (VRMINDQGLS…LPVLTRLTIT (527 aa)) lie on the Virion surface side of the membrane. 3 cysteine pairs are disulfide-bonded: cysteine 178–cysteine 202, cysteine 192–cysteine 253, and cysteine 244–cysteine 257. N-linked (GlcNAc...) asparagine; by host glycans are attached at residues asparagine 284 and asparagine 329. Disulfide bonds link cysteine 350-cysteine 471, cysteine 382-cysteine 392, and cysteine 465-cysteine 475. Residues asparagine 400 and asparagine 448 are each glycosylated (N-linked (GlcNAc...) asparagine; by host). Residue asparagine 507 is glycosylated (N-linked (GlcNAc...) asparagine; by host). A disulfide bridge connects residues cysteine 545 and cysteine 556.

Belongs to the paramyxoviruses hemagglutinin-neuraminidase family. As to quaternary structure, homotetramer; composed of disulfide-linked homodimers. Interacts with F protein trimer.

The protein resides in the virion membrane. It is found in the host cell membrane. It carries out the reaction Hydrolysis of alpha-(2-&gt;3)-, alpha-(2-&gt;6)-, alpha-(2-&gt;8)- glycosidic linkages of terminal sialic acid residues in oligosaccharides, glycoproteins, glycolipids, colominic acid and synthetic substrates.. Functionally, attaches the virus to alpha-2,3-linked sialic acid-containing cell receptors and thereby initiating infection. Binding of HN protein to the receptor induces a conformational change that allows the F protein to trigger virion/cell membranes fusion. Binds to the glycan motifs sialyl Lewis (SLe) and GM2 ganglioside (GM2-glycan). In terms of biological role, neuraminidase activity ensures the efficient spread of the virus by dissociating the mature virions from the neuraminic acid containing glycoproteins. This chain is Hemagglutinin-neuraminidase, found in Mumps orthorubulavirus (MuV).